Reading from the N-terminus, the 179-residue chain is Large ribosomal subunit protein uL5 (179 aa).

This sequence belongs to the universal ribosomal protein uL5 family. In terms of assembly, part of the 50S ribosomal subunit; part of the 5S rRNA/L5/L18/L25 subcomplex. Contacts the 5S rRNA and the P site tRNA. Forms a bridge to the 30S subunit in the 70S ribosome.

Its function is as follows. This is one of the proteins that bind and probably mediate the attachment of the 5S RNA into the large ribosomal subunit, where it forms part of the central protuberance. In the 70S ribosome it contacts protein S13 of the 30S subunit (bridge B1b), connecting the 2 subunits; this bridge is implicated in subunit movement. Contacts the P site tRNA; the 5S rRNA and some of its associated proteins might help stabilize positioning of ribosome-bound tRNAs. In Thiobacillus denitrificans (strain ATCC 25259 / T1), this protein is Large ribosomal subunit protein uL5.